Reading from the N-terminus, the 296-residue chain is CTD kinase subunit gamma (296 aa).

Residues 25-44 (RDSITSSSTTTPPSSQQKLN) are disordered. The segment covering 29–39 (TSSSTTTPPSS) has biased composition (low complexity). Thr35 carries the post-translational modification Phosphothreonine.

It belongs to the CTK3 family. CTDK-I consists of three subunits, CTK1, CTK2 and CTK3 (also called alpha, beta and gamma). Interacts with CTK1. Heterodimerization with CTK2 is required to protect this subunit from degradation. Ubiquitinated. Ubiquitination leads to degradation by the 26S proteasome pathway.

The protein resides in the nucleus. The protein localises to the nucleolus. Its subcellular location is the cytoplasm. In terms of biological role, gamma subunit of the CTDK-I complex, which hyperphosphorylates the C-terminal heptapeptide repeat domain (CTD) of the largest RNA polymerase II subunit. CTDK-I phosphorylates 'Ser-5' if the CTD substrate is not phosphorylated at 'Ser-5', but will phosphorylate 'Ser-2' of a CTD substrate if 'Ser-5' is already phosphorylated. CTDK-I is also more reactive toward substrates that are prephosphorylated at 'Ser-2' or 'Ser-5' compared with an unphosphorylated CTD substrate, therefore efficiently creating doubly phosphorylated CTD repeats. Involved in RNA polymerase I transcription and RNA polymerase II transcriptional elongation, and as part of the CTDK-I complex, pre-mRNA 3'-end processing and SET2 mediated H3K36 methylation. Together with CTK2, required for CTK1 CTD kinase activation. Required for DNA damage induced transcription. Involved in the adaptation to alternative carbon sources, including galactose, glycerol and ethanol, but not raffinose. Required for the integrity of the rDNA locus. The protein is CTD kinase subunit gamma (CTK3) of Saccharomyces cerevisiae (strain ATCC 204508 / S288c) (Baker's yeast).